The chain runs to 212 residues: Agamous-like MADS-box protein MADS9 (212 aa).

Residues 1-61 (MGRGKIEIKR…GKMHEYCSPS (61 aa)) form the MADS-box domain. The region spanning 84–170 (HENLNNELDR…NYIVHHQGMP (87 aa)) is the K-box domain.

Expressed during flower development in stamens and petals.

The protein resides in the nucleus. Functionally, probable transcription factor that may play role in specifying stamen and petal organ identity. This Vitis vinifera (Grape) protein is Agamous-like MADS-box protein MADS9.